We begin with the raw amino-acid sequence, 364 residues long: UDP-3-O-acylglucosamine N-acyltransferase (364 aa).

Residue histidine 258 is the Proton acceptor of the active site.

This sequence belongs to the transferase hexapeptide repeat family. LpxD subfamily. As to quaternary structure, homotrimer.

The enzyme catalyses a UDP-3-O-[(3R)-3-hydroxyacyl]-alpha-D-glucosamine + a (3R)-hydroxyacyl-[ACP] = a UDP-2-N,3-O-bis[(3R)-3-hydroxyacyl]-alpha-D-glucosamine + holo-[ACP] + H(+). It participates in bacterial outer membrane biogenesis; LPS lipid A biosynthesis. Its function is as follows. Catalyzes the N-acylation of UDP-3-O-acylglucosamine using 3-hydroxyacyl-ACP as the acyl donor. Is involved in the biosynthesis of lipid A, a phosphorylated glycolipid that anchors the lipopolysaccharide to the outer membrane of the cell. The protein is UDP-3-O-acylglucosamine N-acyltransferase of Burkholderia orbicola (strain MC0-3).